The following is a 332-amino-acid chain: Myogenic-determination protein (332 aa).

A disordered region spans residues 22-54; the sequence is HNGYGQPTHPGYGFSAYSQQNPIAHPGQNPHQT. The bHLH domain maps to 161-212; sequence DRRKAATMRERRRLRKVNEAFEILKRRTSSNPNQRLPKVEILRNAIEYIESL. Positions 293–309 are enriched in polar residues; the sequence is TTSPIQNKATPSASDTQ. A disordered region spans residues 293-332; that stretch reads TTSPIQNKATPSASDTQSPPSSGATAPTSLHVNFKRKCST. Positions 310-321 are enriched in low complexity; that stretch reads SPPSSGATAPTS.

In terms of assembly, efficient DNA binding requires dimerization with another bHLH protein.

It localises to the nucleus. In terms of biological role, may play an important role in the early development of muscle. This chain is Myogenic-determination protein (nau), found in Drosophila melanogaster (Fruit fly).